Here is a 670-residue protein sequence, read N- to C-terminus: MIPAVADPTTLDGGGARRPLLPETDPRGRAAAGAEQKRPPATPTVLTAVVSAVLLLVLVAVTVLASQHVDGQAGGVPAGEDAVVVEVAASRGVAEGVSEKSTAPLLGSGALQDFSWTNAMLAWQRTAFHFQPPKNWMNDPNGPLYHKGWYHLFYQWNPDSAVWGNITWGHAVSRDLLHWLHLPLAMVPDHPYDANGVWSGSATRLPDGRIVMLYTGSTAESSAQVQNLAEPADASDPLLREWVKSDANPVLVPPPGIGPTDFRDPTTACRTPAGNDTAWRVAIGSKDRDHAGLALVYRTEDFVRYDPAPALMHAVPGTGMWECVDFYPVAAGSGAAAGSGDGLETSAAPGPGVKHVLKASLDDDKHDYYAIGTYDPATDTWTPDSAEDDVGIGLRYDYGKYYASKTFYDPVLRRRVLWGWVGETDSERADILKGWASVQSIPRTVLLDTKTGSNLLQWPVVEVENLRMSGKSFDGVALDRGSVVPLDVGKATQLDIEAVFEVDASDAAGVTEADVTFNCSTSAGAAGRGLLGPFGLLVLADDDLSEQTAVYFYLLKGTDGSLQTFFCQDELRASKANDLVKRVYGSLVPVLDGENLSVRILVDHSIVESFAQGGRTCITSRVYPTRAIYDSARVFLFNNATHAHVKAKSVKIWQLNSAYIRPYPATTTSL.

The interval 1 to 40 (MIPAVADPTTLDGGGARRPLLPETDPRGRAAAGAEQKRPP) is disordered. At 1–44 (MIPAVADPTTLDGGGARRPLLPETDPRGRAAAGAEQKRPPATPT) the chain is on the cytoplasmic side. A propeptide spans 1–112 (MIPAVADPTT…APLLGSGALQ (112 aa)) (removed in mature form). Residues 45–65 (VLTAVVSAVLLLVLVAVTVLA) form a helical; Signal-anchor for type II membrane protein membrane-spanning segment. The Lumenal portion of the chain corresponds to 66–670 (SQHVDGQAGG…RPYPATTTSL (605 aa)). Residues 136–139 (WMND), Gln-155, and Trp-163 contribute to the substrate site. Asp-139 is a catalytic residue. Asn-165 carries N-linked (GlcNAc...) asparagine glycosylation. Substrate contacts are provided by residues 198–199 (WS) and 263–264 (RD). Asn-275 is a glycosylation site (N-linked (GlcNAc...) asparagine). The substrate site is built by Glu-322 and Asp-362. An N-linked (GlcNAc...) asparagine glycan is attached at Asn-518. A disulfide bridge connects residues Cys-519 and Cys-567. Asn-595 and Asn-639 each carry an N-linked (GlcNAc...) asparagine glycan.

This sequence belongs to the glycosyl hydrolase 32 family. As to quaternary structure, may be present in two forms, a 70 kDa monomer and a heterodimer of the 30 kDa and 38 kDa subunits. The ratio of the levels of the two forms within cells appears to be regulated developmentally.

It is found in the membrane. The protein localises to the vacuole lumen. The enzyme catalyses Hydrolysis of terminal non-reducing beta-D-fructofuranoside residues in beta-D-fructofuranosides.. The protein operates within glycan biosynthesis; sucrose metabolism. This is Beta-fructofuranosidase 1 (IVR1) from Zea mays (Maize).